The following is a 520-amino-acid chain: Peptide chain release factor 3 (520 aa).

In terms of domain architecture, tr-type G spans 8 to 277 (ESRKTFAIIS…HAPMPNARQT (270 aa)). GTP-binding positions include 17-24 (SHPDAGKT), 85-89 (DTPGH), and 139-142 (NKLD).

Belongs to the TRAFAC class translation factor GTPase superfamily. Classic translation factor GTPase family. PrfC subfamily.

The protein resides in the cytoplasm. Its function is as follows. Increases the formation of ribosomal termination complexes and stimulates activities of RF-1 and RF-2. It binds guanine nucleotides and has strong preference for UGA stop codons. It may interact directly with the ribosome. The stimulation of RF-1 and RF-2 is significantly reduced by GTP and GDP, but not by GMP. This Staphylococcus epidermidis (strain ATCC 35984 / DSM 28319 / BCRC 17069 / CCUG 31568 / BM 3577 / RP62A) protein is Peptide chain release factor 3.